The chain runs to 545 residues: Glutamine-dependent NAD(+) synthetase (545 aa).

One can recognise a CN hydrolase domain in the interval 5–247 (LRIAMAQFDF…DQWLVVDYMR (243 aa)). The active-site Proton acceptor; for glutaminase activity is the E46. Residue K113 is the For glutaminase activity of the active site. L-glutamine is bound at residue Y119. C151 acts as the Nucleophile; for glutaminase activity in catalysis. L-glutamine is bound by residues S177 and K183. The ligase stretch occupies residues 269 to 545 (VWRAVVRGVQ…RYPISNAYRG (277 aa)). ATP is bound at residue 292–299 (GLSGGIDS). N375 is a deamido-NAD(+) binding site. Residue T399 coordinates ATP. Positions 404 and 516 each coordinate deamido-NAD(+).

In the C-terminal section; belongs to the NAD synthetase family.

It carries out the reaction deamido-NAD(+) + L-glutamine + ATP + H2O = L-glutamate + AMP + diphosphate + NAD(+) + H(+). Its pathway is cofactor biosynthesis; NAD(+) biosynthesis; NAD(+) from deamido-NAD(+) (L-Gln route): step 1/1. Its function is as follows. Catalyzes the ATP-dependent amidation of deamido-NAD to form NAD. Uses L-glutamine as a nitrogen source. This chain is Glutamine-dependent NAD(+) synthetase, found in Xylella fastidiosa (strain 9a5c).